Consider the following 358-residue polypeptide: Phosphate acyltransferase (358 aa).

This sequence belongs to the PlsX family. Homodimer. Probably interacts with PlsY.

The protein resides in the cytoplasm. It catalyses the reaction a fatty acyl-[ACP] + phosphate = an acyl phosphate + holo-[ACP]. The protein operates within lipid metabolism; phospholipid metabolism. In terms of biological role, catalyzes the reversible formation of acyl-phosphate (acyl-PO(4)) from acyl-[acyl-carrier-protein] (acyl-ACP). This enzyme utilizes acyl-ACP as fatty acyl donor, but not acyl-CoA. This is Phosphate acyltransferase from Escherichia fergusonii (strain ATCC 35469 / DSM 13698 / CCUG 18766 / IAM 14443 / JCM 21226 / LMG 7866 / NBRC 102419 / NCTC 12128 / CDC 0568-73).